The chain runs to 311 residues: Homeobox protein knotted-1-like 10 (311 aa).

Disordered regions lie at residues 1–45 and 153–184; these read MEDL…PATT and LCGGAPPPTDNSDEMVGSSEDEPCSGDADAAD. A compositionally biased stretch (gly residues) spans 12–22; it reads SRGGGGGGGGA. Positions 197–217 constitute an ELK domain; the sequence is ELKEMLLKKYSGCLSRLRSEF. Residues 218 to 281 constitute a DNA-binding region (homeobox; TALE-type); the sequence is LKKRKKGKLP…NQRKRHWKPS (64 aa).

It belongs to the TALE/KNOX homeobox family.

It localises to the nucleus. Functionally, probable transcription factor that may be involved in shoot formation during embryogenesis. The protein is Homeobox protein knotted-1-like 10 (OSH71) of Oryza sativa subsp. indica (Rice).